Here is a 311-residue protein sequence, read N- to C-terminus: Syntaxin-111 (311 aa).

Over 1-284 the chain is Cytoplasmic; it reads MNDLMTKSFM…AREHQRSSRK (284 aa). The region spanning 213–275 is the t-SNARE coiled-coil homology domain; sequence VHEIQDRHDA…QGGNKELRKA (63 aa). The chain crosses the membrane as a helical; Anchor for type IV membrane protein span at residues 285–305; sequence WLCIGIIILLLLVLLVIVPIA. The Vesicular segment spans residues 306–311; it reads TSFKRS.

This sequence belongs to the syntaxin family. As to expression, expressed in roots and panicles.

It localises to the cell membrane. It is found in the cytoplasm. Its function is as follows. Vesicle trafficking protein that functions in the secretory pathway. The protein is Syntaxin-111 of Oryza sativa subsp. japonica (Rice).